A 204-amino-acid polypeptide reads, in one-letter code: Small ribosomal subunit protein uS4 (204 aa).

Residues 21–45 (GRPKSPINKREYGPGQHGQRRKKPS) are disordered. Positions 93–156 (RRLDAVVYRM…KQLAMVLDSV (64 aa)) constitute an S4 RNA-binding domain.

The protein belongs to the universal ribosomal protein uS4 family. Part of the 30S ribosomal subunit. Contacts protein S5. The interaction surface between S4 and S5 is involved in control of translational fidelity.

In terms of biological role, one of the primary rRNA binding proteins, it binds directly to 16S rRNA where it nucleates assembly of the body of the 30S subunit. Functionally, with S5 and S12 plays an important role in translational accuracy. This chain is Small ribosomal subunit protein uS4, found in Acidiphilium cryptum (strain JF-5).